We begin with the raw amino-acid sequence, 334 residues long: Nucleoid-associated protein YPTS_1390 (334 aa).

The protein belongs to the YejK family.

Its subcellular location is the cytoplasm. It is found in the nucleoid. In Yersinia pseudotuberculosis serotype IB (strain PB1/+), this protein is Nucleoid-associated protein YPTS_1390.